Consider the following 352-residue polypeptide: Nicotinate-nucleotide--dimethylbenzimidazole phosphoribosyltransferase (352 aa).

Glutamate 318 serves as the catalytic Proton acceptor.

This sequence belongs to the CobT family.

It catalyses the reaction 5,6-dimethylbenzimidazole + nicotinate beta-D-ribonucleotide = alpha-ribazole 5'-phosphate + nicotinate + H(+). It functions in the pathway nucleoside biosynthesis; alpha-ribazole biosynthesis; alpha-ribazole from 5,6-dimethylbenzimidazole: step 1/2. Catalyzes the synthesis of alpha-ribazole-5'-phosphate from nicotinate mononucleotide (NAMN) and 5,6-dimethylbenzimidazole (DMB). The polypeptide is Nicotinate-nucleotide--dimethylbenzimidazole phosphoribosyltransferase (Dehalococcoides mccartyi (strain CBDB1)).